Here is a 167-residue protein sequence, read N- to C-terminus: Large ribosomal subunit protein uL10 (167 aa).

Belongs to the universal ribosomal protein uL10 family. As to quaternary structure, part of the ribosomal stalk of the 50S ribosomal subunit. The N-terminus interacts with L11 and the large rRNA to form the base of the stalk. The C-terminus forms an elongated spine to which L12 dimers bind in a sequential fashion forming a multimeric L10(L12)X complex.

Its function is as follows. Forms part of the ribosomal stalk, playing a central role in the interaction of the ribosome with GTP-bound translation factors. This is Large ribosomal subunit protein uL10 from Psychromonas ingrahamii (strain DSM 17664 / CCUG 51855 / 37).